Consider the following 334-residue polypeptide: HTH-type transcriptional repressor PurR (334 aa).

The 55-residue stretch at 2–56 folds into the HTH lacI-type domain; the sequence is ATIKDVARLAGVSTTTVSHVINKTRFVAEATQEKVNKAVDELNYAPSAVARSLKC. The H-T-H motif DNA-binding region spans 4–23; sequence IKDVARLAGVSTTTVSHVIN. The DNA-binding element occupies 48 to 56; the sequence is SAVARSLKC. 4 residues coordinate hypoxanthine: Phe73, Lys189, Phe220, and Asp274.

As to quaternary structure, homodimer.

The protein operates within purine metabolism; purine nucleotide biosynthesis [regulation]. Its function is as follows. Is the main repressor of the genes involved in the de novo synthesis of purine nucleotides, regulating purB, purC, purEK, purF, purHD, purL, purMN and guaBA expression. PurR is allosterically activated to bind its cognate DNA by binding the purine corepressors, hypoxanthine or guanine, thereby effecting transcription repression. This chain is HTH-type transcriptional repressor PurR, found in Vibrio atlanticus (strain LGP32) (Vibrio splendidus (strain Mel32)).